The primary structure comprises 326 residues: Pantothenate kinase (326 aa).

104–111 (GSVAVGKS) provides a ligand contact to ATP.

Belongs to the prokaryotic pantothenate kinase family.

It is found in the cytoplasm. It carries out the reaction (R)-pantothenate + ATP = (R)-4'-phosphopantothenate + ADP + H(+). Its pathway is cofactor biosynthesis; coenzyme A biosynthesis; CoA from (R)-pantothenate: step 1/5. In Parvibaculum lavamentivorans (strain DS-1 / DSM 13023 / NCIMB 13966), this protein is Pantothenate kinase.